Reading from the N-terminus, the 349-residue chain is Ribosomal RNA small subunit methyltransferase H (349 aa).

Residues 34–36, D54, F81, D102, and Q109 each bind S-adenosyl-L-methionine; that span reads GGH. The interval 328-349 is disordered; sequence SRTGSVQHGQAKHKGVVQRGGS.

The protein belongs to the methyltransferase superfamily. RsmH family.

The protein resides in the cytoplasm. It catalyses the reaction cytidine(1402) in 16S rRNA + S-adenosyl-L-methionine = N(4)-methylcytidine(1402) in 16S rRNA + S-adenosyl-L-homocysteine + H(+). Specifically methylates the N4 position of cytidine in position 1402 (C1402) of 16S rRNA. This is Ribosomal RNA small subunit methyltransferase H from Dehalococcoides mccartyi (strain ATCC BAA-2100 / JCM 16839 / KCTC 5957 / BAV1).